The primary structure comprises 112 residues: Ribonuclease P protein component (112 aa).

The protein belongs to the RnpA family. Consists of a catalytic RNA component (M1 or rnpB) and a protein subunit.

The enzyme catalyses Endonucleolytic cleavage of RNA, removing 5'-extranucleotides from tRNA precursor.. In terms of biological role, RNaseP catalyzes the removal of the 5'-leader sequence from pre-tRNA to produce the mature 5'-terminus. It can also cleave other RNA substrates such as 4.5S RNA. The protein component plays an auxiliary but essential role in vivo by binding to the 5'-leader sequence and broadening the substrate specificity of the ribozyme. In Mesomycoplasma hyopneumoniae (strain 7448) (Mycoplasma hyopneumoniae), this protein is Ribonuclease P protein component.